A 641-amino-acid polypeptide reads, in one-letter code: MNIINLGILAHIDAGKTSVTENLLFASGATEKCGRVDNGDTITDSMDIEKRRGITVRASTTSIIWNGVKCNIIDTPGHMDFIAEVERTFKMLDGAVLILSAKEGIQAQTKLLFSTLQKLQIPTIIFINKIDRAGVNLERLYMDIKTNLSQDVLFMQTVVDGSVYPVCSQTYIKEEYKEFVCNHDDDILERYLADSEISPADYWNTIIALVAKAKVYPVLHGSAMFNIGINELLDAITSFILPPASVSNRLSAYLYKIEHDPKGHKRSFLKIIDGSLRLRDVVRINDSEKFIKIKNLKTIYQGREINVDEVGANDIAIVEDIEDFRIGDYLGAKPCLIQGLSHQHPALKCSVRPNKPEERSKVISALNTLWIEDPSLSFSINSYSDELEISLYGLTQKEIIQTLLEERFSVKVHFDEIKTIYKERPIKKVNKIIQIEVPPNPYWATIGLTLEPLPLGAGLQIESDISYGYLNHSFQNAVFEGIRMSCQSGLHGWEVTDLKVTFTQAEYYSPVSTPADFRQLTPYVFRLALQQSGVDILEPMLCFELQIPQVASSKAITDLQKMMSEIEDISCNNEWCHIKGKVPLNTSKDYASEVSSYTKGLGIFMVKPCGYQITKDGYSDNIRMNEKDKLLFMFQKSMSLK.

The region spanning 1-244 is the tr-type G domain; sequence MNIINLGILA…AITSFILPPA (244 aa). GTP-binding positions include 10-17, 74-78, and 128-131; these read AHIDAGKT, DTPGH, and NKID.

Belongs to the TRAFAC class translation factor GTPase superfamily. Classic translation factor GTPase family. TetM/TetO subfamily.

Its function is as follows. Abolishes the inhibitory effect of tetracyclin on protein synthesis by a non-covalent modification of the ribosomes. In Xylanibacter ruminicola (Prevotella ruminicola), this protein is Tetracycline resistance protein TetQ (tetQ).